Here is a 252-residue protein sequence, read N- to C-terminus: MILHAQAKHGKPGLPWLVFLHGFSGDCHEWQEVGEAFADYSRLYVYLPGHGGSAAISVDGFDDVTDLLRKTLVSYNILNFWLVGYSLGGRVAMMAACQGMPGLCGVVVEGGHPGLQNAEQRAERQRSDRQWAQRFRTEPLTAVFADWYQQPVFASLNDDQRRELVALRSNNNGATLAAMLEATSLAVQPDLRANLSARTFAFYYLCGERDSKFRALAAELAADCHVIPRAGHNAHRENPAGVIASLAQILRF.

It belongs to the AB hydrolase superfamily. MenH family. As to quaternary structure, monomer.

The enzyme catalyses 5-enolpyruvoyl-6-hydroxy-2-succinyl-cyclohex-3-ene-1-carboxylate = (1R,6R)-6-hydroxy-2-succinyl-cyclohexa-2,4-diene-1-carboxylate + pyruvate. It participates in quinol/quinone metabolism; 1,4-dihydroxy-2-naphthoate biosynthesis; 1,4-dihydroxy-2-naphthoate from chorismate: step 3/7. The protein operates within quinol/quinone metabolism; menaquinone biosynthesis. Catalyzes a proton abstraction reaction that results in 2,5-elimination of pyruvate from 2-succinyl-5-enolpyruvyl-6-hydroxy-3-cyclohexene-1-carboxylate (SEPHCHC) and the formation of 2-succinyl-6-hydroxy-2,4-cyclohexadiene-1-carboxylate (SHCHC). This is 2-succinyl-6-hydroxy-2,4-cyclohexadiene-1-carboxylate synthase from Shigella sonnei (strain Ss046).